A 272-amino-acid chain; its full sequence is NH(3)-dependent NAD(+) synthetase (272 aa).

Tyrosine 33 contacts deamido-NAD(+). Residues 45–52, arginine 79, and glutamine 85 contribute to the ATP site; that span reads GISGGQDS. Residue aspartate 51 participates in Mg(2+) binding. A deamido-NAD(+)-binding site is contributed by arginine 138. Threonine 158 serves as a coordination point for ATP. Position 163 (glutamate 163) interacts with Mg(2+). Deamido-NAD(+) contacts are provided by lysine 171 and aspartate 178. ATP contacts are provided by lysine 187 and threonine 209. Deamido-NAD(+) contacts are provided by residues glutamate 224 and 258 to 259; that span reads HK.

This sequence belongs to the NAD synthetase family. Homodimer. Post-translationally, phosphorylated during sporulation.

It carries out the reaction deamido-NAD(+) + NH4(+) + ATP = AMP + diphosphate + NAD(+) + H(+). Its pathway is cofactor biosynthesis; NAD(+) biosynthesis; NAD(+) from deamido-NAD(+) (ammonia route): step 1/1. In terms of biological role, catalyzes the ATP-dependent amidation of deamido-NAD to form NAD. Uses ammonia as a nitrogen source. The protein is NH(3)-dependent NAD(+) synthetase of Bacillus subtilis (strain 168).